The chain runs to 121 residues: Neuromedin-B (121 aa).

A signal peptide spans 1–24; sequence MTLRAVGVRLLGGLLLFALLAAGA. Position 56 is a methionine amide (Met-56). The propeptide occupies 60–121; that stretch reads SLEPPSPSLL…RRLLVQTLQK (62 aa). A disordered region spans residues 61–80; sequence LEPPSPSLLGTAPHTSLRDQ.

Belongs to the bombesin/neuromedin-B/ranatensin family.

It localises to the secreted. The protein resides in the cell projection. Its subcellular location is the neuron projection. In terms of biological role, stimulates smooth muscle contraction. Induces sighing by acting directly on the pre-Botzinger complex, a cluster of several thousand neurons in the ventrolateral medulla responsible for inspiration during respiratory activity. Contributes to the induction of sneezing following exposure to chemical irritants or allergens which causes release of NMB by nasal sensory neurons and activation of NMBR-expressing neurons in the sneeze-evoking region of the brainstem. These in turn activate neurons of the caudal ventral respiratory group, giving rise to the sneezing response. Contributes to induction of acute itch, possibly through activation of the NMBR receptor on dorsal root ganglion neurons. Increases expression of NMBR and steroidogenic mediators STAR, CYP11A1 and HSD3B1 in Leydig cells, induces secretion of testosterone by Leydig cells and also promotes Leydig cell proliferation. Plays a role in the innate immune response to influenza A virus infection by enhancing interferon alpha expression and reducing expression of IL6. Plays a role in CSF1-induced proliferation of osteoclast precursors by contributing to the positive regulation of the expression of the CSF1 receptor CSF1R. The protein is Neuromedin-B (NMB) of Bos taurus (Bovine).